A 289-amino-acid polypeptide reads, in one-letter code: CRISPR-associated endoribonuclease Cas6 2 (289 aa).

The protein belongs to the CRISPR-associated endoribonuclease Cas6 family. Possibly part of the aCascade ribonucleoprotein complex. It depends on Mg(2+) as a cofactor.

Its function is as follows. CRISPR (clustered regularly interspaced short palindromic repeat) is an adaptive immune system that provides protection against mobile genetic elements (viruses, transposable elements and conjugative plasmids). CRISPR clusters contain sequences complementary to antecedent mobile elements and target invading nucleic acids. CRISPR clusters are transcribed and processed into CRISPR RNA (crRNA). Functions as a ssRNA-specific endoribonuclease, generating an 8 base-long tag known as the 5' handle. This is CRISPR-associated endoribonuclease Cas6 2 (cas6b) from Saccharolobus solfataricus (strain ATCC 35092 / DSM 1617 / JCM 11322 / P2) (Sulfolobus solfataricus).